Here is a 1039-residue protein sequence, read N- to C-terminus: 3',5'-cyclic-AMP phosphodiesterase 4 (1039 aa).

The first 29 residues, 1 to 29 (MFNNNNNDKINNTMMSNNPSGQIINLESI), serve as a signal peptide directing secretion. 3 N-linked (GlcNAc...) asparagine glycosylation sites follow: Asn11, Asn34, and Asn37. Topologically, residues 30-201 (DCNSNLSNTT…KKKVNAESLR (172 aa)) are extracellular. 2 disordered regions span residues 40–63 (SIKD…NNIN) and 116–181 (IIPN…NNSI). Over residues 45-63 (NNNNNNNNNNNNNINNNIN) the composition is skewed to low complexity. N-linked (GlcNAc...) asparagine glycosylation is found at Asn119, Asn124, Asn131, Asn167, and Asn178. A helical membrane pass occupies residues 202–222 (GPIIFQNFILYTFFLIVIGTA). Residues 223-226 (EGTS) are Cytoplasmic-facing. A helical transmembrane segment spans residues 227 to 247 (WAPEIRVANFVPYCVMCVVLL). Residues 248 to 256 (EFNRLHKKP) lie on the Extracellular side of the membrane. The helical transmembrane segment at 257–277 (LLRIIFPLYTSNIPFAYMCIF) threads the bilayer. Over 278–283 (SREARK) the chain is Cytoplasmic. The chain crosses the membrane as a helical span at residues 284 to 304 (YVLISLLFFASCLCIFLQSGI). Over 305 to 310 (PDLRKH) the chain is Extracellular. The helical transmembrane segment at 311-331 (IVIFCIIFMINYGCCILFMDW) threads the bilayer. Residues 332-356 (FYIDTTGTKPYRGRILATKIHWGEE) lie on the Cytoplasmic side of the membrane. Residues 357-377 (ATILVSMALLGCIFIVLEKFI) traverse the membrane as a helical segment. The Extracellular portion of the chain corresponds to 378-1039 (KSYARCVAEQ…LTQSNYLIVV (662 aa)). Positions 384 to 414 (VAEQHYQIQCLQKEKEKLQTEINISLKKLDL) form a coiled coil. Residues Asn406, Asn430, Asn500, and Asn515 are each glycosylated (N-linked (GlcNAc...) asparagine). In terms of domain architecture, PDEase spans 533–973 (PEITDQGIQE…QQLQQQQQQQ (441 aa)). His609 serves as the catalytic Proton donor. His613, His648, and Asp649 together coordinate a divalent metal cation. Residues 738–835 (FPTTTNTQQP…NNSNSNNQNQ (98 aa)) form a disordered region. Residues 740–835 (TTTNTQQPSS…NNSNSNNQNQ (96 aa)) show a composition bias toward low complexity. 7 N-linked (GlcNAc...) asparagine glycosylation sites follow: Asn769, Asn791, Asn795, Asn804, Asn809, Asn823, and Asn826. Residue Asp861 participates in a divalent metal cation binding. Asn874, Asn944, Asn1018, and Asn1023 each carry an N-linked (GlcNAc...) asparagine glycan. Residues 978–1019 (QQQQQQLHHHQQQQQFQHQQHQQQLQHQHQQQLNNQNQNQNQ) show a composition bias toward low complexity. The segment at 978 to 1033 (QQQQQQLHHHQQQQQFQHQQHQQQLQHQHQQQLNNQNQNQNQSNSNNSNSFGLTQS) is disordered. Over residues 1020–1033 (SNSNNSNSFGLTQS) the composition is skewed to polar residues.

This sequence belongs to the cyclic nucleotide phosphodiesterase family. A divalent metal cation is required as a cofactor.

The protein localises to the cell membrane. The enzyme catalyses 3',5'-cyclic AMP + H2O = AMP + H(+). Its activity is regulated as follows. Inhibited by 3-isobutyl-1-methylxanthine (IBMX). Phosphodiesterase specific for extracellular cAMP. Involved in the degradation of extracellular cAMP specifically during multicellular development. In Dictyostelium discoideum (Social amoeba), this protein is 3',5'-cyclic-AMP phosphodiesterase 4 (Pde4).